Reading from the N-terminus, the 267-residue chain is Hydroxyethylthiazole kinase (267 aa).

Methionine 42 is a substrate binding site. Positions 118 and 164 each coordinate ATP. A substrate-binding site is contributed by alanine 191.

It belongs to the Thz kinase family. The cofactor is Mg(2+).

It carries out the reaction 5-(2-hydroxyethyl)-4-methylthiazole + ATP = 4-methyl-5-(2-phosphooxyethyl)-thiazole + ADP + H(+). It functions in the pathway cofactor biosynthesis; thiamine diphosphate biosynthesis; 4-methyl-5-(2-phosphoethyl)-thiazole from 5-(2-hydroxyethyl)-4-methylthiazole: step 1/1. In terms of biological role, catalyzes the phosphorylation of the hydroxyl group of 4-methyl-5-beta-hydroxyethylthiazole (THZ). This is Hydroxyethylthiazole kinase from Pasteurella multocida (strain Pm70).